A 171-amino-acid polypeptide reads, in one-letter code: S-ribosylhomocysteine lyase (171 aa).

Fe cation-binding residues include H54, H58, and C128.

It belongs to the LuxS family. Homodimer. It depends on Fe cation as a cofactor.

It carries out the reaction S-(5-deoxy-D-ribos-5-yl)-L-homocysteine = (S)-4,5-dihydroxypentane-2,3-dione + L-homocysteine. Involved in the synthesis of autoinducer 2 (AI-2) which is secreted by bacteria and is used to communicate both the cell density and the metabolic potential of the environment. The regulation of gene expression in response to changes in cell density is called quorum sensing. Catalyzes the transformation of S-ribosylhomocysteine (RHC) to homocysteine (HC) and 4,5-dihydroxy-2,3-pentadione (DPD). The sequence is that of S-ribosylhomocysteine lyase from Citrobacter koseri (strain ATCC BAA-895 / CDC 4225-83 / SGSC4696).